The chain runs to 501 residues: uncharacterized protein (501 aa).

Glutamate 236 functions as the Proton donor in the catalytic mechanism. Catalysis depends on glutamate 333, which acts as the Nucleophile.

The protein belongs to the glycosyl hydrolase 5 (cellulase A) family.

The protein resides in the mitochondrion intermembrane space. This is an uncharacterized protein from Saccharomyces cerevisiae (strain ATCC 204508 / S288c) (Baker's yeast).